Consider the following 156-residue polypeptide: 3-dehydroquinate dehydratase 1 (156 aa).

Residue Tyr-32 is the Proton acceptor of the active site. Substrate is bound by residues Asn-84, His-90, and Asp-97. The active-site Proton donor is the His-110. Residues 111 to 112 and Arg-121 each bind substrate; that span reads LS.

It belongs to the type-II 3-dehydroquinase family. Homododecamer.

It catalyses the reaction 3-dehydroquinate = 3-dehydroshikimate + H2O. It functions in the pathway metabolic intermediate biosynthesis; chorismate biosynthesis; chorismate from D-erythrose 4-phosphate and phosphoenolpyruvate: step 3/7. Functionally, catalyzes a trans-dehydration via an enolate intermediate. In Ralstonia nicotianae (strain ATCC BAA-1114 / GMI1000) (Ralstonia solanacearum), this protein is 3-dehydroquinate dehydratase 1 (aroQ1).